Consider the following 280-residue polypeptide: Phosphatidylserine decarboxylase proenzyme (280 aa).

Active-site charge relay system; for autoendoproteolytic cleavage activity residues include aspartate 90, histidine 146, and serine 247. The active-site Schiff-base intermediate with substrate; via pyruvic acid; for decarboxylase activity is the serine 247. The residue at position 247 (serine 247) is a Pyruvic acid (Ser); by autocatalysis.

It belongs to the phosphatidylserine decarboxylase family. PSD-B subfamily. Prokaryotic type I sub-subfamily. As to quaternary structure, heterodimer of a large membrane-associated beta subunit and a small pyruvoyl-containing alpha subunit. Pyruvate is required as a cofactor. Is synthesized initially as an inactive proenzyme. Formation of the active enzyme involves a self-maturation process in which the active site pyruvoyl group is generated from an internal serine residue via an autocatalytic post-translational modification. Two non-identical subunits are generated from the proenzyme in this reaction, and the pyruvate is formed at the N-terminus of the alpha chain, which is derived from the carboxyl end of the proenzyme. The autoendoproteolytic cleavage occurs by a canonical serine protease mechanism, in which the side chain hydroxyl group of the serine supplies its oxygen atom to form the C-terminus of the beta chain, while the remainder of the serine residue undergoes an oxidative deamination to produce ammonia and the pyruvoyl prosthetic group on the alpha chain. During this reaction, the Ser that is part of the protease active site of the proenzyme becomes the pyruvoyl prosthetic group, which constitutes an essential element of the active site of the mature decarboxylase.

The protein localises to the cell membrane. The catalysed reaction is a 1,2-diacyl-sn-glycero-3-phospho-L-serine + H(+) = a 1,2-diacyl-sn-glycero-3-phosphoethanolamine + CO2. It functions in the pathway phospholipid metabolism; phosphatidylethanolamine biosynthesis; phosphatidylethanolamine from CDP-diacylglycerol: step 2/2. Its function is as follows. Catalyzes the formation of phosphatidylethanolamine (PtdEtn) from phosphatidylserine (PtdSer). The polypeptide is Phosphatidylserine decarboxylase proenzyme (Myxococcus xanthus (strain DK1622)).